The primary structure comprises 268 residues: uncharacterized protein (268 aa).

The protein to M.tuberculosis Rv0025 and Rv0026.

This is an uncharacterized protein from Mycobacterium tuberculosis (strain CDC 1551 / Oshkosh).